The primary structure comprises 220 residues: Guanylate kinase (220 aa).

Residues 15 to 194 (GLMLVISSPS…ALDAVQSIVK (180 aa)) form the Guanylate kinase-like domain. 22 to 29 (SPSGAGKS) contacts ATP.

The protein belongs to the guanylate kinase family.

It is found in the cytoplasm. It catalyses the reaction GMP + ATP = GDP + ADP. Essential for recycling GMP and indirectly, cGMP. This is Guanylate kinase from Rhizobium johnstonii (strain DSM 114642 / LMG 32736 / 3841) (Rhizobium leguminosarum bv. viciae).